A 252-amino-acid chain; its full sequence is Cyclic di-GMP binding protein VCA0042 (252 aa).

The span at 1-11 (MNSRPAEKIDN) shows a compositional bias: basic and acidic residues. Residues 1–24 (MNSRPAEKIDNNDGQTETPRSKTV) are disordered. Residues 12–24 (NDGQTETPRSKTV) are compositionally biased toward polar residues. The PilZ domain maps to 134–233 (QLRKEPRFEL…EEGRNNAKNL (100 aa)).

This sequence belongs to the YcgR family. Dimer.

The protein resides in the bacterial flagellum basal body. Its function is as follows. May act as a flagellar brake, regulating swimming and swarming in a bis-(3'-5') cyclic diguanylic acid (c-di-GMP)-dependent manner. Increasing levels of c-di-GMP lead to decreased motility (Potential). Binds bis-(3'-5') cyclic diguanylic acid (c-di-GMP) with a dissociation constant of 170 nM in the presence of 10 mM KCl and with 100 nM in its absence. Binds 1 to 2 c-di-GMP per subunit. Only 1 c-di-GMP is seen in the wild-type crystal, while 2 are seen in the mutant. Depending on the concentration of K(+) stoichiometries of 1:1, 1.43:1 and 2:1 are determined by isothermal titration calorimetry. In Vibrio cholerae serotype O1 (strain ATCC 39315 / El Tor Inaba N16961), this protein is Cyclic di-GMP binding protein VCA0042.